The primary structure comprises 593 residues: Acetyl-coenzyme A transferase nodX (593 aa).

The tract at residues D572–D593 is disordered. The segment covering F580–D593 has biased composition (gly residues).

Belongs to the CoA-transferase III family.

Its pathway is secondary metabolite biosynthesis. Its function is as follows. Acetyl-coenzyme A transferase; part of the gene cluster that mediates the biosynthesis of the indole diterpenes nodulisporic acids (NA). Nodulisporic acid A (NAA) and its chemically modified derivatives are of particular significance because of their highly potent insecticidal activity against blood-feeding arthropods and lack of observable adverse effects on mammals, in particular the tremogenicity associated with the paspaline-derived IDTs is not observed. The geranylgeranyl diphosphate (GGPP) synthase ggs1, localized outside of the cluster, is proposed to catalyze the first step in nodulisporic acid biosynthesis via conversion of farnesyl pyrophosphate and isopentyl pyrophosphate into geranylgeranyl pyrophosphate (GGPP). Condensation of indole-3-glycerol phosphate with GGPP by the prenyl transferase nodC then forms 3-geranylgeranylindole (3-GGI). Epoxidation by the FAD-dependent monooxygenase nodM leads to a single-epoxidized-GGI that is substrate of the terpene cyclase nodB for cyclization to yield emindole SB. The terminal methyl carbon, C28, of emindole SB is then oxidized by the cytochrome P450 monooxygenase nodW to produce nodulisporic acid F (NAF), the pentacyclic core of NAA. NAF is converted to nodulisporic acid E (NAE) via prenylation. This step is probably performed by one of the indole diterpene prenyltransferases nodD1 or nodD2. Several oxidation steps performed by the FAD-linked oxidoreductase nodO and one of the cytochrome P450 monooxygenase nodR, nodX or nodZ further convert NAE to nodulisporic acid D (NAD). NAD is substrate of cytochrome P450 monooxygenase nodJ to produce the precursor of nodulisporic acid C (NAC), converted to NAC by one of the indole diterpene prenyltransferases nodD1 or nodD2. The FAD-dependent monooxygenase nodY2 then oxidizes NAC to nodulisporic acid B (NAB). Finally NAB is converted to NAA by one of the cytochrome P450 monooxygenases nodR, nodX or nodZ. The polypeptide is Acetyl-coenzyme A transferase nodX (Hypoxylon pulicicidum).